We begin with the raw amino-acid sequence, 796 residues long: Cadherin-11 (796 aa).

The signal sequence occupies residues 1–24 (MKENYCLQAALVCLSMLYHSQAFA). A propeptide spanning residues 25–53 (LERRSHLHPSFHGHHEKGKEGQVLQRSKR) is cleaved from the precursor. 5 Cadherin domains span residues 54-159 (GWVW…PPEF), 160-268 (LHEI…PPKF), 269-383 (PQSV…PPMF), 384-486 (LAPS…DNAP), and 487-612 (KFAA…YILN). Residues 54–617 (GWVWNQFFVI…AYILNAGLST (564 aa)) are Extracellular-facing. N-linked (GlcNAc...) asparagine glycosylation is found at asparagine 455 and asparagine 540. Residues 618–640 (GALIAILACIVILLVIVVLFVTL) form a helical membrane-spanning segment. The Cytoplasmic portion of the chain corresponds to 641-796 (RRQKKEPLIV…GSKDTFDDDS (156 aa)). Phosphoserine is present on serine 788. At threonine 791 the chain carries Phosphothreonine.

Interacts with PCDH8. As to expression, selectively expressed in osteoblastic cell lines, precursor cell lines of osteoblasts, and primary osteoblastic cells from calvaria, as well as in lung, testis, and brain tissues at low levels.

The protein resides in the cell membrane. Its function is as follows. Cadherins are calcium-dependent cell adhesion proteins. They preferentially interact with themselves in a homophilic manner in connecting cells; cadherins may thus contribute to the sorting of heterogeneous cell types. Required for proper focal adhesion assembly. Involved in the regulation of cell migration. The sequence is that of Cadherin-11 (Cdh11) from Mus musculus (Mouse).